Here is a 1679-residue protein sequence, read N- to C-terminus: Furin-like protease 2 (1679 aa).

Positions 1 to 10 (MSNTTRSSRV) are enriched in polar residues. The interval 1–42 (MSNTTRSSRVTIGRIGTTPQITDPWSSGLEKQRPSRCGGPKS) is disordered. Residues N3, N109, and N130 are each glycosylated (N-linked (GlcNAc...) asparagine). The disordered stretch occupies residues 139-164 (VSSLHSSRRTNPPSSSSSSSSNVDVD). Over residues 147 to 160 (RTNPPSSSSSSSSN) the composition is skewed to low complexity. N205 carries N-linked (GlcNAc...) asparagine glycosylation. The 323-residue stretch at 383–705 (QWYLNGGAKD…YGLMDAGAMV (323 aa)) folds into the Peptidase S8 domain. D417 (charge relay system) is an active-site residue. Positions 424-456 (HPDLAQNYDPEASFDINGNDSDPTPQDNGDNKH) are disordered. Residues 439–451 (INGNDSDPTPQDN) are compositionally biased toward polar residues. N442 carries N-linked (GlcNAc...) asparagine glycosylation. The Charge relay system role is filled by H456. Intrachain disulfides connect C473–C629 and C565–C595. The N-linked (GlcNAc...) asparagine glycan is linked to N480. The active-site Charge relay system is the S637. Residues 714-852 (VPPQHICKSR…QLIFYGTSTQ (139 aa)) form the P/Homo B domain. Cysteines 720 and 748 form a disulfide. The N-linked (GlcNAc...) asparagine glycan is linked to N927. 10 FU repeats span residues 961 to 1006 (KKIL…RSFP), 1009 to 1056 (VGIC…GYFE), 1060 to 1104 (NRTC…DTYE), 1107 to 1152 (DNKC…GFYA), 1156 to 1204 (RLEC…SEFY), 1208 to 1253 (EGQC…GFFV), 1256 to 1299 (GSLC…GYYS), 1301 to 1346 (RGIC…GFYK), 1348 to 1393 (DFGC…QYYD), and 1396 to 1443 (SATC…QTLA). N1060 is a glycosylation site (N-linked (GlcNAc...) asparagine). The N-linked (GlcNAc...) asparagine glycan is linked to N1181. N-linked (GlcNAc...) asparagine glycosylation is found at N1274 and N1277. The N-linked (GlcNAc...) asparagine glycan is linked to N1439. The helical transmembrane segment at 1512–1532 (AIAVAICLLIITIFSIIFAVL) threads the bilayer. At 1533 to 1679 (QRNSNHVSRN…STTSRTNIRS (147 aa)) the chain is on the cytoplasmic side. Positions 1660–1679 (TNAERKNHPSSTTSRTNIRS) are disordered. The segment covering 1668–1679 (PSSTTSRTNIRS) has biased composition (polar residues).

Belongs to the peptidase S8 family. Furin subfamily. Requires Ca(2+) as cofactor. Transient expression in a subset of central nervous system neurons during embryonic stages 12-13. Expression in developing tracheal tree from stage 13 to end of embryonic development.

It localises to the membrane. It carries out the reaction Release of mature proteins from their proproteins by cleavage of -Arg-Xaa-Yaa-Arg-|-Zaa- bonds, where Xaa can be any amino acid and Yaa is Arg or Lys. Releases albumin, complement component C3 and von Willebrand factor from their respective precursors.. Functionally, furin is likely to represent the ubiquitous endoprotease activity within constitutive secretory pathways and capable of cleavage at the RX(K/R)R consensus motif. This is Furin-like protease 2 (Fur2) from Drosophila melanogaster (Fruit fly).